A 507-amino-acid chain; its full sequence is Probable cytosol aminopeptidase (507 aa).

Residues Lys-269 and Asp-274 each coordinate Mn(2+). Lys-281 is a catalytic residue. 3 residues coordinate Mn(2+): Asp-292, Asp-351, and Glu-353. Arg-355 is an active-site residue.

The protein belongs to the peptidase M17 family. Mn(2+) is required as a cofactor.

Its subcellular location is the cytoplasm. It carries out the reaction Release of an N-terminal amino acid, Xaa-|-Yaa-, in which Xaa is preferably Leu, but may be other amino acids including Pro although not Arg or Lys, and Yaa may be Pro. Amino acid amides and methyl esters are also readily hydrolyzed, but rates on arylamides are exceedingly low.. It catalyses the reaction Release of an N-terminal amino acid, preferentially leucine, but not glutamic or aspartic acids.. Functionally, presumably involved in the processing and regular turnover of intracellular proteins. Catalyzes the removal of unsubstituted N-terminal amino acids from various peptides. The sequence is that of Probable cytosol aminopeptidase from Chromohalobacter salexigens (strain ATCC BAA-138 / DSM 3043 / CIP 106854 / NCIMB 13768 / 1H11).